A 427-amino-acid polypeptide reads, in one-letter code: Phosphoribosylamine--glycine ligase (427 aa).

One can recognise an ATP-grasp domain in the interval lysine 110–lysine 315. Leucine 136–serine 196 provides a ligand contact to ATP. Mg(2+) is bound by residues glutamate 285 and asparagine 287.

The protein belongs to the GARS family. Mg(2+) is required as a cofactor. Requires Mn(2+) as cofactor.

The enzyme catalyses 5-phospho-beta-D-ribosylamine + glycine + ATP = N(1)-(5-phospho-beta-D-ribosyl)glycinamide + ADP + phosphate + H(+). It participates in purine metabolism; IMP biosynthesis via de novo pathway; N(1)-(5-phospho-D-ribosyl)glycinamide from 5-phospho-alpha-D-ribose 1-diphosphate: step 2/2. This chain is Phosphoribosylamine--glycine ligase, found in Caulobacter vibrioides (strain ATCC 19089 / CIP 103742 / CB 15) (Caulobacter crescentus).